Reading from the N-terminus, the 475-residue chain is Aspartyl/glutamyl-tRNA(Asn/Gln) amidotransferase subunit B (475 aa).

This sequence belongs to the GatB/GatE family. GatB subfamily. In terms of assembly, heterotrimer of A, B and C subunits.

The enzyme catalyses L-glutamyl-tRNA(Gln) + L-glutamine + ATP + H2O = L-glutaminyl-tRNA(Gln) + L-glutamate + ADP + phosphate + H(+). The catalysed reaction is L-aspartyl-tRNA(Asn) + L-glutamine + ATP + H2O = L-asparaginyl-tRNA(Asn) + L-glutamate + ADP + phosphate + 2 H(+). Functionally, allows the formation of correctly charged Asn-tRNA(Asn) or Gln-tRNA(Gln) through the transamidation of misacylated Asp-tRNA(Asn) or Glu-tRNA(Gln) in organisms which lack either or both of asparaginyl-tRNA or glutaminyl-tRNA synthetases. The reaction takes place in the presence of glutamine and ATP through an activated phospho-Asp-tRNA(Asn) or phospho-Glu-tRNA(Gln). The chain is Aspartyl/glutamyl-tRNA(Asn/Gln) amidotransferase subunit B from Chlorobium limicola (strain DSM 245 / NBRC 103803 / 6330).